Here is a 473-residue protein sequence, read N- to C-terminus: 3-oxoacyl-[acyl-carrier-protein] synthase I, chloroplastic (473 aa).

The span at 1-10 (MQALQSSSLR) shows a compositional bias: polar residues. Residues 1-26 (MQALQSSSLRASPPNPLRLPSNRQSH) are disordered. A chloroplast-targeting transit peptide spans 1-46 (MQALQSSSLRASPPNPLRLPSNRQSHQLITNARPLRRQQRSFISAS). A Ketosynthase family 3 (KS3) domain is found at 60 to 470 (KKRVVITGMG…GHNSVVAFSA (411 aa)). Active-site for beta-ketoacyl synthase activity residues include cysteine 224, histidine 364, and histidine 400.

Belongs to the thiolase-like superfamily. Beta-ketoacyl-ACP synthases family. In terms of assembly, homodimer.

The protein resides in the plastid. It localises to the chloroplast stroma. The enzyme catalyses a fatty acyl-[ACP] + malonyl-[ACP] + H(+) = a 3-oxoacyl-[ACP] + holo-[ACP] + CO2. Catalyzes the condensation reaction of fatty acid synthesis by the addition to an acyl acceptor of two carbons from malonyl-ACP. Specific for elongation from C-10 to unsaturated C-16 and C-18 fatty acids. The protein is 3-oxoacyl-[acyl-carrier-protein] synthase I, chloroplastic (KAS1) of Arabidopsis thaliana (Mouse-ear cress).